The sequence spans 343 residues: Glyceraldehyde-3-phosphate dehydrogenase (343 aa).

NAD(+)-binding positions include 13-14 (TI) and G112. Position 141–143 (141–143 (SCN)) interacts with D-glyceraldehyde 3-phosphate. Residue C142 is the Nucleophile of the active site. Position 170 (R170) interacts with NAD(+). 196–197 (HA) contacts D-glyceraldehyde 3-phosphate. Q303 provides a ligand contact to NAD(+).

This sequence belongs to the glyceraldehyde-3-phosphate dehydrogenase family. In terms of assembly, homotetramer.

It is found in the cytoplasm. It catalyses the reaction D-glyceraldehyde 3-phosphate + phosphate + NADP(+) = (2R)-3-phospho-glyceroyl phosphate + NADPH + H(+). The catalysed reaction is D-glyceraldehyde 3-phosphate + phosphate + NAD(+) = (2R)-3-phospho-glyceroyl phosphate + NADH + H(+). The protein operates within carbohydrate degradation; glycolysis; pyruvate from D-glyceraldehyde 3-phosphate: step 1/5. The sequence is that of Glyceraldehyde-3-phosphate dehydrogenase (gap) from Aeropyrum pernix (strain ATCC 700893 / DSM 11879 / JCM 9820 / NBRC 100138 / K1).